A 341-amino-acid chain; its full sequence is Coiled-coil domain-containing protein 86 (341 aa).

The segment at 1–341 is disordered; it reads MGTPLRRSRR…QPPQRPVAKV (341 aa). Ser-18 is modified (phosphoserine). Over residues 26–49 the composition is skewed to basic and acidic residues; that stretch reads EVSRAKRALVDFKSNPEETRELES. Position 59 is a phosphoserine (Ser-59). Over residues 64-73 the composition is skewed to low complexity; it reads PETSPESPCP. Thr-66 is subject to Phosphothreonine. Ser-67, Ser-70, Ser-81, Ser-92, Ser-103, Ser-114, and Ser-124 each carry phosphoserine. Residues 105–114 show a composition bias toward polar residues; that stretch reads AGQTESNPES. The segment covering 130–139 has biased composition (basic and acidic residues); the sequence is EVAHAKEEVI. Phosphoserine is present on residues Ser-142, Ser-169, Ser-170, and Ser-200. The segment covering 219 to 235 has biased composition (basic residues); sequence GKPKSGRVWKDRSKKRF. Residues 254 to 298 are compositionally biased toward basic and acidic residues; it reads ERQERKLAKDFARHLEEEKQRRRQEKKERRAENLRRRLENERKAE. Residues 261–304 adopt a coiled-coil conformation; that stretch reads AKDFARHLEEEKQRRRQEKKERRAENLRRRLENERKAEIVQVIR. A compositionally biased stretch (basic residues) spans 307–317; the sequence is AKLKKAKKKQL. Arg-323 carries the post-translational modification Citrulline.

In terms of processing, citrullinated by PADI4.

It localises to the nucleus. The protein resides in the chromosome. It is found in the nucleolus. Its function is as follows. Required for proper chromosome segregation during mitosis and error-free mitotic progression. The protein is Coiled-coil domain-containing protein 86 of Rattus norvegicus (Rat).